The primary structure comprises 314 residues: Tudor-interacting repair regulator protein (314 aa).

Gly-2 carries the N-myristoyl glycine lipid modification.

This sequence belongs to the Nudix hydrolase family. TIRR subfamily. As to quaternary structure, interacts (via the cytoplasmic part) with syndecan-4 (SDC4), but not with other syndecan proteins. Myristoylated in vitro; additional evidence is however required to confirm myristoylation in vivo. Ubiquitously expressed. Expressed in embryonic brain, eyes, gizzard, heart, intestine, kidney, liver, tibia and skin.

Its subcellular location is the nucleus. The protein resides in the cytoplasm. It localises to the cytoskeleton. The protein localises to the cell membrane. It is found in the cell junction. Its subcellular location is the focal adhesion. Key regulator of TP53BP1 required to stabilize TP53BP1 and regulate its recruitment to chromatin. This chain is Tudor-interacting repair regulator protein (NUDT16L1), found in Gallus gallus (Chicken).